The sequence spans 389 residues: Putative phosphoserine aminotransferase (389 aa).

Arginine 45 provides a ligand contact to L-glutamate. Pyridoxal 5'-phosphate-binding positions include 79–80, tryptophan 114, threonine 169, aspartate 191, and glutamine 214; that span reads GT. Lysine 215 is modified (N6-(pyridoxal phosphate)lysine). 265-266 contacts pyridoxal 5'-phosphate; it reads NT.

It belongs to the class-V pyridoxal-phosphate-dependent aminotransferase family. SerC subfamily. In terms of assembly, homodimer. Pyridoxal 5'-phosphate serves as cofactor.

The catalysed reaction is O-phospho-L-serine + 2-oxoglutarate = 3-phosphooxypyruvate + L-glutamate. It catalyses the reaction 4-(phosphooxy)-L-threonine + 2-oxoglutarate = (R)-3-hydroxy-2-oxo-4-phosphooxybutanoate + L-glutamate. The protein operates within amino-acid biosynthesis; L-serine biosynthesis; L-serine from 3-phospho-D-glycerate: step 2/3. It functions in the pathway cofactor biosynthesis; pyridoxine 5'-phosphate biosynthesis; pyridoxine 5'-phosphate from D-erythrose 4-phosphate: step 3/5. Its function is as follows. Catalyzes the reversible conversion of 3-phosphohydroxypyruvate to phosphoserine and of 3-hydroxy-2-oxo-4-phosphonooxybutanoate to phosphohydroxythreonine. This Schizosaccharomyces pombe (strain 972 / ATCC 24843) (Fission yeast) protein is Putative phosphoserine aminotransferase.